A 492-amino-acid chain; its full sequence is Bifunctional purine biosynthesis protein PurH (492 aa).

The 144-residue stretch at 1 to 144 folds into the MGS-like domain; the sequence is MKKAILSVSN…KNYKHVTTIV (144 aa).

This sequence belongs to the PurH family.

The enzyme catalyses (6R)-10-formyltetrahydrofolate + 5-amino-1-(5-phospho-beta-D-ribosyl)imidazole-4-carboxamide = 5-formamido-1-(5-phospho-D-ribosyl)imidazole-4-carboxamide + (6S)-5,6,7,8-tetrahydrofolate. It catalyses the reaction IMP + H2O = 5-formamido-1-(5-phospho-D-ribosyl)imidazole-4-carboxamide. It functions in the pathway purine metabolism; IMP biosynthesis via de novo pathway; 5-formamido-1-(5-phospho-D-ribosyl)imidazole-4-carboxamide from 5-amino-1-(5-phospho-D-ribosyl)imidazole-4-carboxamide (10-formyl THF route): step 1/1. The protein operates within purine metabolism; IMP biosynthesis via de novo pathway; IMP from 5-formamido-1-(5-phospho-D-ribosyl)imidazole-4-carboxamide: step 1/1. This is Bifunctional purine biosynthesis protein PurH from Staphylococcus aureus (strain JH1).